Consider the following 206-residue polypeptide: Large ribosomal subunit protein uL4 (206 aa).

Belongs to the universal ribosomal protein uL4 family. As to quaternary structure, part of the 50S ribosomal subunit.

In terms of biological role, one of the primary rRNA binding proteins, this protein initially binds near the 5'-end of the 23S rRNA. It is important during the early stages of 50S assembly. It makes multiple contacts with different domains of the 23S rRNA in the assembled 50S subunit and ribosome. Forms part of the polypeptide exit tunnel. The protein is Large ribosomal subunit protein uL4 of Desulfatibacillum aliphaticivorans.